The primary structure comprises 405 residues: Amino sugar nitrososynthase DnmZ (405 aa).

Positions 117 and 332 each coordinate dTDP.

It belongs to the acyl-CoA dehydrogenase family. In terms of assembly, homotetramer. The cofactor is FAD.

It participates in antibiotic biosynthesis. In terms of biological role, nitrososynthase involved in the biosynthesis of baumycin. Catalyzes the double-oxidation of TDP-L-epi-vancosamine to TDP-L-epi-vancosonitrose. The rapid turnover of TDP-L-epi-vancosamine suggests that this compound, or a closely related analog, is the natural substrate for DnmZ. Can also catalyze the double-oxidation of TDP-L-evernosamine to TDP-L-evernitrosose. The chain is Amino sugar nitrososynthase DnmZ from Streptomyces peucetius.